The primary structure comprises 499 residues: Cytochrome P450 11B1, mitochondrial (499 aa).

The transit peptide at 1-24 directs the protein to the mitochondrion; that stretch reads MALRVTADVWLARPWQCLHRTRAL. Residue cysteine 446 coordinates heme.

It belongs to the cytochrome P450 family. Heme serves as cofactor. In terms of tissue distribution, adrenal zona fasciculata/reticularis.

The protein resides in the mitochondrion inner membrane. The enzyme catalyses a steroid + 2 reduced [adrenodoxin] + O2 + 2 H(+) = an 11beta-hydroxysteroid + 2 oxidized [adrenodoxin] + H2O. The catalysed reaction is 21-hydroxyprogesterone + 2 reduced [adrenodoxin] + O2 + 2 H(+) = corticosterone + 2 oxidized [adrenodoxin] + H2O. It catalyses the reaction 21-hydroxyprogesterone + 2 reduced [adrenodoxin] + O2 + 2 H(+) = 18-hydroxy-11-deoxycorticosterone + 2 oxidized [adrenodoxin] + H2O. It carries out the reaction 21-hydroxyprogesterone + 2 reduced [adrenodoxin] + O2 + 2 H(+) = 19-hydroxy-11-deoxycorticosterone + 2 oxidized [adrenodoxin] + H2O. The enzyme catalyses 11-deoxycortisol + 2 reduced [adrenodoxin] + O2 + 2 H(+) = cortisol + 2 oxidized [adrenodoxin] + H2O. The catalysed reaction is cortisol + 2 reduced [adrenodoxin] + O2 + 2 H(+) = 18-hydroxycortisol + 2 oxidized [adrenodoxin] + H2O. It catalyses the reaction 11-deoxycortisol + 2 reduced [adrenodoxin] + O2 + 2 H(+) = 18-hydroxy-11-deoxycortisol + 2 oxidized [adrenodoxin] + H2O. It participates in steroid biosynthesis; glucocorticoid biosynthesis. It functions in the pathway steroid hormone biosynthesis. Functionally, a cytochrome P450 monooxygenase involved in the biosynthesis of adrenal corticoids. Catalyzes a variety of reactions that are essential for many species, including detoxification, defense, and the formation of endogenous chemicals like steroid hormones. Steroid 11beta, 18- and 19-hydroxylase with preferred regioselectivity at 11beta, then 18, and lastly 19. Catalyzes the hydroxylation of 11-deoxycortisol and 11-deoxycorticosterone (21-hydroxyprogesterone) at 11beta position, yielding cortisol or corticosterone, respectively, but cannot produce aldosterone. Mechanistically, uses molecular oxygen inserting one oxygen atom into a substrate for hydroxylation and reducing the second into a water molecule. Two electrons are provided by NADPH via a two-protein mitochondrial transfer system comprising flavoprotein FDXR (adrenodoxin/ferredoxin reductase) and nonheme iron-sulfur protein FDX1 or FDX2 (adrenodoxin/ferredoxin). Due to its lack of 18-oxidation activity, it is incapable of generating aldosterone. Could also be involved in the androgen metabolic pathway. This chain is Cytochrome P450 11B1, mitochondrial (Cyp11b1), found in Rattus norvegicus (Rat).